The following is a 341-amino-acid chain: Type II restriction enzyme BgcI specificity subunit S.BcgI (341 aa).

Belongs to the type-I restriction system S methylase family. Heterotrimer of two A and one B subunit. Both subunits are necessary for DNA-binding, which is sequence non-specific. Requires Mg(2+) as cofactor.

It carries out the reaction Endonucleolytic cleavage of DNA to give specific double-stranded fragments with terminal 5'-phosphates.. DNA restriction requires S-adenosyl-L-methionine and Mg(2+), and is inhibited by S-adenosyl-homocysteine. SAM may be a cofactor for DNA restriction. In terms of biological role, the specificity subunit. A B, G, H and S subtype restriction enzyme that recognizes the double-stranded sequence 5'-CGAN(6)TGC-3' and cleaves bilaterally and symmetrically 10 base pairs upstream and 12 base pairs downstream of the sequence to release a 34-base pair fragment. Methylation of the recognition sequence occurs on the adenine in either one or both strands; seems to methylate restricted DNA. This subunit degrades DNA in a non-specific manner. The protein is Type II restriction enzyme BgcI specificity subunit S.BcgI of Heyndrickxia coagulans (Weizmannia coagulans).